A 211-amino-acid chain; its full sequence is Molybdenum cofactor guanylyltransferase (211 aa).

Residues 12-14 (LAG), Lys-25, Asn-53, Asp-71, and Asp-101 each bind GTP. Asp-101 is a Mg(2+) binding site.

The protein belongs to the MobA family. As to quaternary structure, monomer. Mg(2+) is required as a cofactor.

Its subcellular location is the cytoplasm. The catalysed reaction is Mo-molybdopterin + GTP + H(+) = Mo-molybdopterin guanine dinucleotide + diphosphate. Functionally, transfers a GMP moiety from GTP to Mo-molybdopterin (Mo-MPT) cofactor (Moco or molybdenum cofactor) to form Mo-molybdopterin guanine dinucleotide (Mo-MGD) cofactor. The sequence is that of Molybdenum cofactor guanylyltransferase from Acidovorax ebreus (strain TPSY) (Diaphorobacter sp. (strain TPSY)).